A 252-amino-acid polypeptide reads, in one-letter code: Osmotin-like protein (252 aa).

Residues Met-1–Ser-24 form the signal peptide.

The protein resides in the secreted. It is found in the cell wall. In Solanum lycopersicum (Tomato), this protein is Osmotin-like protein.